A 411-amino-acid polypeptide reads, in one-letter code: LIM domain-binding protein 1 (411 aa).

An N-acetylserine modification is found at Ser2. The residue at position 61 (Thr61) is a Phosphothreonine. Residues Ser265 and Ser302 each carry the phosphoserine modification. Disordered regions lie at residues 283-330 (APPA…TFAL) and 367-411 (DAAN…QASQ). The segment covering 302–318 (SGGSTMSSGGGNTNNSN) has biased composition (low complexity). In terms of domain architecture, LIM interaction domain (LID) spans 336–375 (DVMVVGEPTLMGGEFGDEDERLITRLENTQFDAANGIDDE).

It belongs to the LDB family. Interacts with ESR1. Forms homodimers and heterodimers. Interacts with and activates LHX1/LIM1. Interacts with the LIM domains of ISL1 and LMO2. Can assemble in a complex with LMO2 and TAL1/SCL but does not interact with TAL1/SCL directly. Strongly interacts with the LIM2 domain of LMX1A and more weakly with the LIM1 domain. Homodimerization is not required for, and does not effect, LMX1A-binding. Component of a nuclear TAL-1 complex composed at least of CBFA2T3, LDB1, TAL1 and TCF3. Interacts with LHX6 and LHX9. At neuronal promoters, forms a complex with LHX3 involved in the specification of interneurons, in motor neurons, it is displaced by ISL1 to form a ternary complex in which ISL1 contacts both LHX3 and LDB1. Interacts with SLK; leading to negatively regulate SLK kinase activity. Interacts with YWHAZ. Interacts with PRDM1/BLIMP1. Interacts with LMO4. Interacts with RLIM/RNF12; the interaction inhibits the ubiquitination of LMO proteins. Post-translationally, ubiquitinated by RLIM/RNF12, leading to its degradation by the proteasome. As to expression, expressed in a wide range of adult tissues including brain, heart, skeletal muscle, colon, thymus, spleen, kidney, liver, small intestine, lung and peripheral blood leukocytes.

The protein resides in the nucleus. Functionally, binds to the LIM domain of a wide variety of LIM domain-containing transcription factors. May regulate the transcriptional activity of LIM-containing proteins by determining specific partner interactions. Plays a role in the development of interneurons and motor neurons in cooperation with LHX3 and ISL1. Acts synergistically with LHX1/LIM1 in axis formation and activation of gene expression. Acts with LMO2 in the regulation of red blood cell development, maintaining erythroid precursors in an immature state. This is LIM domain-binding protein 1 (LDB1) from Homo sapiens (Human).